Here is a 192-residue protein sequence, read N- to C-terminus: UPF0312 protein YPK_1931 (192 aa).

Positions Met1–Ala23 are cleaved as a signal peptide.

The protein belongs to the UPF0312 family. Type 1 subfamily.

The protein resides in the periplasm. This is UPF0312 protein YPK_1931 from Yersinia pseudotuberculosis serotype O:3 (strain YPIII).